Reading from the N-terminus, the 378-residue chain is Carbamoyl phosphate synthase small chain (378 aa).

Residues 1–189 form a CPSase region; that stretch reads MTKPAILALA…DSHPEIAASE (189 aa). Positions 47, 241, and 243 each coordinate L-glutamine. The Glutamine amidotransferase type-1 domain maps to 193 to 378; that stretch reads HVVAYDYGVK…RFIDAMAKRR (186 aa). Residue Cys269 is the Nucleophile of the active site. L-glutamine is bound by residues Leu270, Gln273, Asn311, Gly313, and Phe314. Active-site residues include His353 and Glu355.

Belongs to the CarA family. In terms of assembly, composed of two chains; the small (or glutamine) chain promotes the hydrolysis of glutamine to ammonia, which is used by the large (or ammonia) chain to synthesize carbamoyl phosphate. Tetramer of heterodimers (alpha,beta)4.

The catalysed reaction is hydrogencarbonate + L-glutamine + 2 ATP + H2O = carbamoyl phosphate + L-glutamate + 2 ADP + phosphate + 2 H(+). It carries out the reaction L-glutamine + H2O = L-glutamate + NH4(+). The protein operates within amino-acid biosynthesis; L-arginine biosynthesis; carbamoyl phosphate from bicarbonate: step 1/1. It participates in pyrimidine metabolism; UMP biosynthesis via de novo pathway; (S)-dihydroorotate from bicarbonate: step 1/3. Its function is as follows. Small subunit of the glutamine-dependent carbamoyl phosphate synthetase (CPSase). CPSase catalyzes the formation of carbamoyl phosphate from the ammonia moiety of glutamine, carbonate, and phosphate donated by ATP, constituting the first step of 2 biosynthetic pathways, one leading to arginine and/or urea and the other to pyrimidine nucleotides. The small subunit (glutamine amidotransferase) binds and cleaves glutamine to supply the large subunit with the substrate ammonia. The polypeptide is Carbamoyl phosphate synthase small chain (Pseudomonas syringae pv. tomato (strain ATCC BAA-871 / DC3000)).